Here is a 401-residue protein sequence, read N- to C-terminus: 8-amino-7-oxononanoate synthase (401 aa).

R24 contacts substrate. Position 111–112 (111–112 (GF)) interacts with pyridoxal 5'-phosphate. A substrate-binding site is contributed by H137. 3 residues coordinate pyridoxal 5'-phosphate: S183, H211, and T240. K243 is subject to N6-(pyridoxal phosphate)lysine. T357 contacts substrate.

This sequence belongs to the class-II pyridoxal-phosphate-dependent aminotransferase family. BioF subfamily. Homodimer. Pyridoxal 5'-phosphate serves as cofactor.

The enzyme catalyses 6-carboxyhexanoyl-[ACP] + L-alanine + H(+) = (8S)-8-amino-7-oxononanoate + holo-[ACP] + CO2. The protein operates within cofactor biosynthesis; biotin biosynthesis. Functionally, catalyzes the decarboxylative condensation of pimeloyl-[acyl-carrier protein] and L-alanine to produce 8-amino-7-oxononanoate (AON), [acyl-carrier protein], and carbon dioxide. This is 8-amino-7-oxononanoate synthase from Xanthomonas euvesicatoria pv. vesicatoria (strain 85-10) (Xanthomonas campestris pv. vesicatoria).